Reading from the N-terminus, the 209-residue chain is uncharacterized protein (209 aa).

Residues 1-17 form the signal peptide; it reads MKKLVTGLLALSLFLAA. Residues 17–106 are disordered; the sequence is ACGQDSDQQK…SGQTTNNQKS (90 aa). The N-palmitoyl cysteine moiety is linked to residue Cys18. Residue Cys18 is the site of S-diacylglycerol cysteine attachment. The segment covering 23-70 has biased composition (basic and acidic residues); that stretch reads DQQKDSNKEKDDKAKTEQQDKKTNDSSKDKKDNKDDSKDVNKDNKDNS. Positions 71–106 are enriched in low complexity; sequence ANDNQQQSNSNATNNDQNQTNNNQSNSGQTTNNQKS.

It is found in the cell membrane. This is an uncharacterized protein from Staphylococcus aureus (strain MRSA252).